A 133-amino-acid chain; its full sequence is ATP synthase epsilon chain (133 aa).

This sequence belongs to the ATPase epsilon chain family. As to quaternary structure, F-type ATPases have 2 components, CF(1) - the catalytic core - and CF(0) - the membrane proton channel. CF(1) has five subunits: alpha(3), beta(3), gamma(1), delta(1), epsilon(1). CF(0) has three main subunits: a, b and c.

It localises to the cell membrane. Functionally, produces ATP from ADP in the presence of a proton gradient across the membrane. The polypeptide is ATP synthase epsilon chain (Clostridium botulinum (strain Langeland / NCTC 10281 / Type F)).